The following is a 378-amino-acid chain: Dual-specificity RNA methyltransferase RlmN (378 aa).

The active-site Proton acceptor is the Glu-95. The Radical SAM core domain maps to 101-345; it reads EETRGTLCVS…TTIRKTRGDD (245 aa). Cys-108 and Cys-350 form a disulfide bridge. [4Fe-4S] cluster-binding residues include Cys-115, Cys-119, and Cys-122. S-adenosyl-L-methionine contacts are provided by residues 176–177, Ser-208, 230–232, and Asn-307; these read GE and SLH. The S-methylcysteine intermediate role is filled by Cys-350.

The protein belongs to the radical SAM superfamily. RlmN family. [4Fe-4S] cluster is required as a cofactor.

Its subcellular location is the cytoplasm. It carries out the reaction adenosine(2503) in 23S rRNA + 2 reduced [2Fe-2S]-[ferredoxin] + 2 S-adenosyl-L-methionine = 2-methyladenosine(2503) in 23S rRNA + 5'-deoxyadenosine + L-methionine + 2 oxidized [2Fe-2S]-[ferredoxin] + S-adenosyl-L-homocysteine. The catalysed reaction is adenosine(37) in tRNA + 2 reduced [2Fe-2S]-[ferredoxin] + 2 S-adenosyl-L-methionine = 2-methyladenosine(37) in tRNA + 5'-deoxyadenosine + L-methionine + 2 oxidized [2Fe-2S]-[ferredoxin] + S-adenosyl-L-homocysteine. Functionally, specifically methylates position 2 of adenine 2503 in 23S rRNA and position 2 of adenine 37 in tRNAs. m2A2503 modification seems to play a crucial role in the proofreading step occurring at the peptidyl transferase center and thus would serve to optimize ribosomal fidelity. This is Dual-specificity RNA methyltransferase RlmN from Burkholderia thailandensis (strain ATCC 700388 / DSM 13276 / CCUG 48851 / CIP 106301 / E264).